Here is an 896-residue protein sequence, read N- to C-terminus: DNA mismatch repair protein MutS (896 aa).

G618–S625 is a binding site for ATP. Residues G805–S825 show a composition bias toward basic and acidic residues. Residues G805–D826 are disordered.

Belongs to the DNA mismatch repair MutS family.

Its function is as follows. This protein is involved in the repair of mismatches in DNA. It is possible that it carries out the mismatch recognition step. This protein has a weak ATPase activity. The polypeptide is DNA mismatch repair protein MutS (Halothermothrix orenii (strain H 168 / OCM 544 / DSM 9562)).